The primary structure comprises 170 residues: F107 fimbrial protein (170 aa).

The N-terminal stretch at 1–21 (MKRLVFISFVALSMTAGSAMA) is a signal peptide. An intrachain disulfide couples C37 to C78.

The protein belongs to the fimbrial protein family.

It is found in the fimbrium. Functionally, fimbriae (also called pili), polar filaments radiating from the surface of the bacterium to a length of 0.5-1.5 micrometers and numbering 100-300 per cell, enable bacteria to colonize the epithelium of specific host organs. The polypeptide is F107 fimbrial protein (fedA) (Escherichia coli).